We begin with the raw amino-acid sequence, 101 residues long: EKLGQGQQPRQWLQPRQGQQGYYPTSPQQSGQGQQLGQGQQGYYPTSPQQSGQGQQGYDSPYHVSAEHQAASLKVAKAQQLAAQLPAMCRLEGGDALLASQ.

Over residues 1 to 27 (EKLGQGQQPRQWLQPRQGQQGYYPTSP) the composition is skewed to polar residues. The interval 1-65 (EKLGQGQQPR…QGYDSPYHVS (65 aa)) is disordered. A compositionally biased stretch (low complexity) spans 41-62 (QGYYPTSPQQSGQGQQGYDSPY).

It belongs to the gliadin/glutenin family. As to quaternary structure, disulfide-bridge linked aggregates.

Functionally, glutenins are high-molecular weight seed storage proteins of wheat endosperm. Thought to be responsible for the visco-elastic property of wheat dough. This is Glutenin, high molecular weight subunit PC256 from Triticum aestivum (Wheat).